The sequence spans 281 residues: Proteasome subunit beta (281 aa).

Residues 1–53 (MEANTRSTGRLPAAFLTPGSSSFMDFLGEHQPEMLPGNRQLPPVQGVIEAPHG) constitute a propeptide, removed in mature form; by autocatalysis. Thr-54 (nucleophile) is an active-site residue.

The protein belongs to the peptidase T1B family. As to quaternary structure, the 20S proteasome core is composed of 14 alpha and 14 beta subunits that assemble into four stacked heptameric rings, resulting in a barrel-shaped structure. The two inner rings, each composed of seven catalytic beta subunits, are sandwiched by two outer rings, each composed of seven alpha subunits. The catalytic chamber with the active sites is on the inside of the barrel. Has probably a gated structure, the ends of the cylinder being occluded by the N-termini of the alpha-subunits. Is likely capped by the proteasome-associated ATPase, ARC.

It localises to the cytoplasm. The enzyme catalyses Cleavage of peptide bonds with very broad specificity.. The protein operates within protein degradation; proteasomal Pup-dependent pathway. Its activity is regulated as follows. The formation of the proteasomal ATPase ARC-20S proteasome complex, likely via the docking of the C-termini of ARC into the intersubunit pockets in the alpha-rings, may trigger opening of the gate for substrate entry. Interconversion between the open-gate and close-gate conformations leads to a dynamic regulation of the 20S proteasome proteolysis activity. Peptidolytic activity is completely inhibited by lactacystin, and to a lesser extent, by N-acetyl-Leu-Leu-norleucinal (Ac-LLnL) and benzoyloxycarbonyl-Leu-Leu-Leu-vinylsulfone (Z-LLL-VS) in vitro. In terms of biological role, component of the proteasome core, a large protease complex with broad specificity involved in protein degradation. The S.coelicolor proteasome is able to cleave oligopeptides after hydrophobic residues, but not after basic or acidic residues, thus displaying chymotrypsin-like activity but not trypsin-like activity. This is Proteasome subunit beta from Streptomyces coelicolor (strain ATCC BAA-471 / A3(2) / M145).